Here is a 268-residue protein sequence, read N- to C-terminus: Tryptophan synthase alpha chain (268 aa).

Active-site proton acceptor residues include Glu49 and Asp60.

Belongs to the TrpA family. As to quaternary structure, tetramer of two alpha and two beta chains.

It carries out the reaction (1S,2R)-1-C-(indol-3-yl)glycerol 3-phosphate + L-serine = D-glyceraldehyde 3-phosphate + L-tryptophan + H2O. Its pathway is amino-acid biosynthesis; L-tryptophan biosynthesis; L-tryptophan from chorismate: step 5/5. Its function is as follows. The alpha subunit is responsible for the aldol cleavage of indoleglycerol phosphate to indole and glyceraldehyde 3-phosphate. This chain is Tryptophan synthase alpha chain, found in Vibrio parahaemolyticus serotype O3:K6 (strain RIMD 2210633).